Reading from the N-terminus, the 356-residue chain is MSHALSDGPAPSGALESVMTLEQFILDRRGRFPQSTGAFSRLLRDVSVAAKIINHNIRRAGILDVMGESGTVNVQDEKQKKLDEIADRELERALRRGGECCLVGSEEQADTISLSPRGDFQERFAVFFDPLDGSSNTDVNASVGTIFSVYTLPEGADEGDALDVALRPGAEQVAAGYVAYGSSTMFVFTTGNGVNGFTLDPGIGEFLLTHPDLQIPQAPAMYSINEADIEDFSPELRAFLQWLKTKDPDTGHRIRARYIGSFVSDFHRNLLTGGLYMYPATSDHPDGKLRLMYEANPMAFLVEQAGGRASTGHQRILDLQPEGLHERTPLFIGSAPLVKAAEAYLQGRGAEAVGGA.

Residues glutamate 106, aspartate 129, leucine 131, and aspartate 132 each coordinate Mg(2+). Substrate is bound by residues 132–135 (DGSS), asparagine 225, tyrosine 258, and lysine 288. Glutamate 294 serves as a coordination point for Mg(2+).

It belongs to the FBPase class 1 family. As to quaternary structure, homotetramer. Mg(2+) serves as cofactor.

The protein localises to the cytoplasm. The catalysed reaction is beta-D-fructose 1,6-bisphosphate + H2O = beta-D-fructose 6-phosphate + phosphate. Its pathway is carbohydrate biosynthesis; gluconeogenesis. This chain is Fructose-1,6-bisphosphatase class 1 1, found in Salinibacter ruber (strain DSM 13855 / M31).